The sequence spans 523 residues: Probable endopeptidase p60 (523 aa).

The signal sequence occupies residues 1-27; that stretch reads MNMKKATIAATAGIAVTAFAAPTIASA. Residues 28–71 enclose the LysM 1 domain; it reads STVVVEAGDTLWGIAQDNGTTVDALKKANKLTTDKIVPGQKLQV. One can recognise an SH3b domain in the interval 78 to 142; sequence KTEKSVSATW…VNGKYLGNAV (65 aa). Residues 146 to 188 are disordered; that stretch reads PSATPEVKQEETTQAAPAQQTKTEVKQATPAATTEKDAVETKT. Residues 157–167 are compositionally biased toward low complexity; it reads TTQAAPAQQTK. A LysM 2 domain is found at 198-241; the sequence is TTHTVKSGDTIWALSVKYGASVQDLMSWNNLSSSSIYVGQNIAV. 2 stretches are compositionally biased toward low complexity: residues 251–282 and 290–318; these read PKAE…TTTT and EKQT…TNAS. Disordered regions lie at residues 251–323 and 367–408; these read PKAE…YTVK and ATNT…SSSA. The LysM 3 domain occupies 318–361; that stretch reads SSYTVKSGDTLGKIASTFGTTVSKIKALNGLTSDNLQVGDVLKV. A NlpC/P60 domain is found at 405–523; that stretch reads SSSASAIIAE…GQYLVGFGRV (119 aa). The active-site Nucleophile is C435. H485 acts as the Proton acceptor in catalysis. The active site involves N497.

The protein belongs to the peptidase C40 family.

This major extracellular protein may be involved in the invasion of non-professional phagocytic cells by Listeria. This Listeria seeligeri protein is Probable endopeptidase p60 (iap).